Reading from the N-terminus, the 246-residue chain is Probable transcriptional regulatory protein YebC (246 aa).

The disordered stretch occupies residues 1 to 20; it reads MAGHSKWANTRHRKAAQDAK.

Belongs to the TACO1 family.

The protein localises to the cytoplasm. This is Probable transcriptional regulatory protein YebC from Shigella dysenteriae serotype 1 (strain Sd197).